The primary structure comprises 209 residues: MCAKKRSASSNRWLQESLKDKYVVQAQKKGLRSRAWFKLDQIQKSDRLFQPYMTIIDLGAAPGSWSQYVTTQIGKNGHVIACDLRYMSPLSGVDFIQGDFCNKQVLQAILQRLENKKAQVILSDMSPNFSGKPEIDIPKSMYLVEKALKMCRYLLIPGGTFIVKVFQGDGFYEYICSMHALFNTVKIIKPDASRSRSREVYLIAKGHKI.

Residues Gly-63, Trp-65, Asp-83, Asp-99, and Asp-124 each coordinate S-adenosyl-L-methionine. Lys-164 serves as the catalytic Proton acceptor.

Belongs to the class I-like SAM-binding methyltransferase superfamily. RNA methyltransferase RlmE family.

It is found in the cytoplasm. It catalyses the reaction uridine(2552) in 23S rRNA + S-adenosyl-L-methionine = 2'-O-methyluridine(2552) in 23S rRNA + S-adenosyl-L-homocysteine + H(+). Its function is as follows. Specifically methylates the uridine in position 2552 of 23S rRNA at the 2'-O position of the ribose in the fully assembled 50S ribosomal subunit. The chain is Ribosomal RNA large subunit methyltransferase E from Baumannia cicadellinicola subsp. Homalodisca coagulata.